Consider the following 263-residue polypeptide: MLQIELQKWIQRFSSTIRLFFRLLIRLKTIKVNTNNLVEQIYIVGPGSLNITLLTACFISMVFTMQIAKEFLYLDAASAIGAVIVIAFTRELSPVLTAVIIAGKIGSSFTAEIATMETTEQIDALYLLNTNPIDYLVFPKVASCFLMLPILSIISLTASIAISLFVAFVMYDIPSSVFLKSAFNALSISDFLICLEKSMFFAIIIGFISCQWGLTSNGGAKGVGNSTTSSVVTILFTVFITDFVLSYFMFQTTGSSIAQANNI.

A run of 5 helical transmembrane segments spans residues 43 to 63 (IVGP…SMVF), 70 to 89 (EFLY…IAFT), 150 to 170 (ILSI…AFVM), 188 to 208 (ISDF…IGFI), and 230 to 250 (SVVT…YFMF).

Belongs to the MlaE permease family.

The protein resides in the plastid. The protein localises to the chloroplast membrane. In terms of biological role, could be part of an ABC transporter complex. In Pyropia yezoensis (Susabi-nori), this protein is Probable ABC transporter permease protein ycf63 (ycf63).